Consider the following 29-residue polypeptide: Cyclotide psyleio A (29 aa).

The cyclopeptide (Gly-Asp) cross-link spans 1–29; it reads GLPICGETCFTGTCNTPGCSCTYPICTRD. Cystine bridges form between cysteine 5-cysteine 19, cysteine 9-cysteine 21, and cysteine 14-cysteine 26.

This is a cyclic peptide.

Probably participates in a plant defense mechanism. The polypeptide is Cyclotide psyleio A (Psychotria brachyceras).